Consider the following 334-residue polypeptide: Adenosine deaminase (334 aa).

Zn(2+)-binding residues include His12 and His14. Residues His14, Asp16, and Gly170 each contribute to the substrate site. His197 lines the Zn(2+) pocket. Residue Glu200 is the Proton donor of the active site. Asp278 contacts Zn(2+). Asp279 contacts substrate.

This sequence belongs to the metallo-dependent hydrolases superfamily. Adenosine and AMP deaminases family. Adenosine deaminase subfamily. Zn(2+) is required as a cofactor.

The enzyme catalyses adenosine + H2O + H(+) = inosine + NH4(+). It carries out the reaction 2'-deoxyadenosine + H2O + H(+) = 2'-deoxyinosine + NH4(+). Functionally, catalyzes the hydrolytic deamination of adenosine and 2-deoxyadenosine. The polypeptide is Adenosine deaminase (Yersinia pseudotuberculosis serotype IB (strain PB1/+)).